Reading from the N-terminus, the 75-residue chain is Sec-independent protein translocase protein TatA (75 aa).

A helical transmembrane segment spans residues 1–21 (MGSFSIWHWLVVLAIVLLVFG). The segment at 41-75 (KGMRDEDKPNAQLGDESRTQDASRTAQDEHDRNAR) is disordered.

The protein belongs to the TatA/E family. The Tat system comprises two distinct complexes: a TatABC complex, containing multiple copies of TatA, TatB and TatC subunits, and a separate TatA complex, containing only TatA subunits. Substrates initially bind to the TatABC complex, which probably triggers association of the separate TatA complex to form the active translocon.

Its subcellular location is the cell inner membrane. In terms of biological role, part of the twin-arginine translocation (Tat) system that transports large folded proteins containing a characteristic twin-arginine motif in their signal peptide across membranes. TatA could form the protein-conducting channel of the Tat system. The protein is Sec-independent protein translocase protein TatA of Stenotrophomonas maltophilia (strain K279a).